A 232-amino-acid chain; its full sequence is Cilia- and flagella-associated protein 95 (232 aa).

Residues 1 to 96 (MDSSDSSCQE…PVWISETREK (96 aa)) are Extracellular-facing. Asparagine 75 is a glycosylation site (N-linked (GlcNAc...) asparagine). The helical transmembrane segment at 97-115 (MAQVCLNTKLAKIKSKALL) threads the bilayer. The Cytoplasmic portion of the chain corresponds to 116 to 232 (NEETMNSGII…TGGPIAPFLK (117 aa)). The interval 153–163 (LTTYAEEYAPP) is mn.

Microtubule inner protein component of sperm flagellar doublet microtubules. Interacts with MYH9. Interacts with MYH10. Expressed in trachea multiciliated cells.

Its subcellular location is the cytoplasm. The protein localises to the cytoskeleton. It is found in the cilium axoneme. The protein resides in the flagellum axoneme. It localises to the cell membrane. Its function is as follows. Microtubule inner protein (MIP) part of the dynein-decorated doublet microtubules (DMTs) in cilia axoneme, which is required for motile cilia beating. The chain is Cilia- and flagella-associated protein 95 from Bos taurus (Bovine).